Consider the following 136-residue polypeptide: Small ribosomal subunit protein eS19 (136 aa).

At Lys23 the chain carries N6-acetyllysine. An Omega-N-methylarginine modification is found at Arg67. Residues Lys111 and Lys115 each carry the N6-acetyllysine modification. Residues 116 to 136 (DQDGGRKLTPQGQRDLDRIAG) are disordered.

Belongs to the eukaryotic ribosomal protein eS19 family. In terms of assembly, component of the small ribosomal subunit. Part of the small subunit (SSU) processome, composed of more than 70 proteins and the RNA chaperone small nucleolar RNA (snoRNA) U3. Interacts with RPS19BP1; the interaction is direct and mediates the integration of RPS19 in state post-A1. Interacts with RPS19BP1.

It localises to the cytoplasm. Its subcellular location is the nucleus. The protein resides in the nucleolus. Its function is as follows. Component of the small ribosomal subunit. The ribosome is a large ribonucleoprotein complex responsible for the synthesis of proteins in the cell. Required for pre-rRNA processing and maturation of 40S ribosomal subunits. Part of the small subunit (SSU) processome, first precursor of the small eukaryotic ribosomal subunit. During the assembly of the SSU processome in the nucleolus, many ribosome biogenesis factors, an RNA chaperone and ribosomal proteins associate with the nascent pre-rRNA and work in concert to generate RNA folding, modifications, rearrangements and cleavage as well as targeted degradation of pre-ribosomal RNA by the RNA exosome. In Sus scrofa (Pig), this protein is Small ribosomal subunit protein eS19 (RPS19).